Here is a 428-residue protein sequence, read N- to C-terminus: Aerobic C4-dicarboxylate transport protein (428 aa).

Transmembrane regions (helical) follow at residues 5-27 (LFKSLYFQVLTAIAIGILLGHFY), 47-64 (MIIAPVIFCTVVTGIAGM), 77-99 (ALLYFEIVSTIALIIGLIIVNVV), 141-163 (VIGAFASGNILQVLLFAVLFGFA), 184-206 (VIFGIINMIMRLAPIGAFGAMAF), 219-241 (LGQLIICFYITCILFVVLVLGSI), 326-348 (IVHQITLLIVLLLSSKGAAGVTG), and 352-374 (IVLAATLSAVGHLPVAGLALILG).

The protein belongs to the dicarboxylate/amino acid:cation symporter (DAACS) (TC 2.A.23) family.

It is found in the cell inner membrane. Its function is as follows. Responsible for the aerobic transport of the dicarboxylates fumarate and malate and to a lesser extent succinate, from the periplasm across the inner membrane. This chain is Aerobic C4-dicarboxylate transport protein, found in Escherichia coli O157:H7.